We begin with the raw amino-acid sequence, 186 residues long: ATP synthase subunit delta, cyanelle (186 aa).

This sequence belongs to the ATPase delta chain family. In terms of assembly, F-type ATPases have 2 components, F(1) - the catalytic core - and F(0) - the membrane proton channel. F(1) has five subunits: alpha(3), beta(3), gamma(1), delta(1), epsilon(1). CF(0) has four main subunits: a(1), b(1), b'(1) and c(10-14). The alpha and beta chains form an alternating ring which encloses part of the gamma chain. F(1) is attached to F(0) by a central stalk formed by the gamma and epsilon chains, while a peripheral stalk is formed by the delta, b and b' chains.

It is found in the plastid. The protein resides in the cyanelle thylakoid membrane. F(1)F(0) ATP synthase produces ATP from ADP in the presence of a proton or sodium gradient. F-type ATPases consist of two structural domains, F(1) containing the extramembraneous catalytic core and F(0) containing the membrane proton channel, linked together by a central stalk and a peripheral stalk. During catalysis, ATP synthesis in the catalytic domain of F(1) is coupled via a rotary mechanism of the central stalk subunits to proton translocation. Its function is as follows. This protein is part of the stalk that links CF(0) to CF(1). It either transmits conformational changes from CF(0) to CF(1) or is implicated in proton conduction. This Cyanophora paradoxa protein is ATP synthase subunit delta, cyanelle.